An 867-amino-acid chain; its full sequence is Leucine--tRNA ligase (867 aa).

Positions 57–67 match the 'HIGH' region motif; that stretch reads PYPSGTLHMGH. Residues 308–327 are disordered; that stretch reads SQDERTSDDQPKRGVPTGAV. Positions 309–319 are enriched in basic and acidic residues; that stretch reads QDERTSDDQPK. Residues 631-635 carry the 'KMSKS' region motif; it reads KMSKS. Lys-634 serves as a coordination point for ATP.

The protein belongs to the class-I aminoacyl-tRNA synthetase family.

The protein localises to the cytoplasm. The catalysed reaction is tRNA(Leu) + L-leucine + ATP = L-leucyl-tRNA(Leu) + AMP + diphosphate. The chain is Leucine--tRNA ligase from Synechococcus sp. (strain CC9311).